The primary structure comprises 413 residues: Envelope glycoprotein M (413 aa).

Topologically, residues 1 to 19 (MGNYYYGGQESRLERISWR) are intravirion. The chain crosses the membrane as a helical span at residues 20 to 40 (MWMVEAACYIVLVLLTLVSSF). At 41-88 (ASLSSTTGFPCFVGTVGESSFGGDLMGHGMTPARRDGVKIFFMSSPST) the chain is on the virion surface side. Residues 89-109 (LFVVFSAVFVWLVVAVYLLLG) traverse the membrane as a helical segment. The Intravirion portion of the chain corresponds to 110-133 (GVRVKMCNFDSSYGASELSSAVAT). Residues 134–154 (MTSLVTLSITAWAWQVFVLML) traverse the membrane as a helical segment. The Virion surface segment spans residues 155–160 (SYRQLT). The helical transmembrane segment at 161–181 (LAAVAFVGIFIAGLVFMLSFA) threads the bilayer. Residues 182–218 (SGGKSPENYATFNSQLKTVCKDVHAVITAFKAVVLNL) are Intravirion-facing. A helical transmembrane segment spans residues 219-239 (FCVVFGVWHLMLVMLGAVIMV). Topologically, residues 240 to 251 (LNFGVSIPKATT) are virion surface. The helical transmembrane segment at 252-272 (GALVVFIVLGLVYLMMIELVV) threads the bilayer. The Intravirion segment spans residues 273 to 277 (SRYVH). The helical transmembrane segment at 278–298 (VLLGPHLGMIIALGIAGTSAL) threads the bilayer. Over 299 to 312 (SYAETLDEIMYASW) the chain is Virion surface. A helical transmembrane segment spans residues 313–333 (KPVAAGILGAFSVIVLALAVL). Residues 334-413 (RAVRSYKFHK…EDVIYENMKY (80 aa)) are Intravirion-facing.

The protein belongs to the herpesviridae glycoprotein M family. As to quaternary structure, interacts (via N-terminus) with gN (via N-terminus). The gM-gN heterodimer forms the gCII complex.

The protein resides in the virion membrane. The protein localises to the host Golgi apparatus. It localises to the host trans-Golgi network. It is found in the host endosome membrane. Its subcellular location is the host nucleus inner membrane. Envelope glycoprotein important for virion assembly and egress. Plays a role in the correct incorporation of gH-gL into virion membrane. Directs the glycoprotein N (gN) to the host trans-Golgi network. This chain is Envelope glycoprotein M, found in Psittacid herpesvirus 1 (isolate Amazon parrot/-/97-0001/1997) (PsHV-1).